A 498-amino-acid polypeptide reads, in one-letter code: Ribose import ATP-binding protein RbsA 1 (498 aa).

ABC transporter domains follow at residues 7–243 (LHIQ…VGRR) and 254–496 (PRGE…IGKS). Residue 39–46 (GENGAGKS) participates in ATP binding.

This sequence belongs to the ABC transporter superfamily. Ribose importer (TC 3.A.1.2.1) family. The complex is composed of an ATP-binding protein (RbsA), two transmembrane proteins (RbsC) and a solute-binding protein (RbsB).

The protein resides in the cell inner membrane. The enzyme catalyses D-ribose(out) + ATP + H2O = D-ribose(in) + ADP + phosphate + H(+). In terms of biological role, part of the ABC transporter complex RbsABC involved in ribose import. Responsible for energy coupling to the transport system. The protein is Ribose import ATP-binding protein RbsA 1 of Pasteurella multocida (strain Pm70).